We begin with the raw amino-acid sequence, 444 residues long: Spermidine/putrescine import ATP-binding protein PotA (444 aa).

In terms of domain architecture, ABC transporter spans Ile-11–Ile-332. Gly-43 to Thr-50 contacts ATP. The segment at Arg-111–Arg-201 is insert.

Belongs to the ABC transporter superfamily. Spermidine/putrescine importer (TC 3.A.1.11.1) family. In terms of assembly, the complex is composed of two ATP-binding proteins (PotA), two transmembrane proteins (PotB and PotC) and a solute-binding protein (PotD).

The protein resides in the cell membrane. The catalysed reaction is ATP + H2O + polyamine-[polyamine-binding protein]Side 1 = ADP + phosphate + polyamineSide 2 + [polyamine-binding protein]Side 1.. Functionally, part of the ABC transporter complex PotABCD involved in spermidine/putrescine import. Responsible for energy coupling to the transport system. In Mesomycoplasma hyopneumoniae (strain 232) (Mycoplasma hyopneumoniae), this protein is Spermidine/putrescine import ATP-binding protein PotA.